The sequence spans 1430 residues: rRNA biogenesis protein RRP5 (1430 aa).

6 S1 motif domains span residues 74-160, 176-238, 261-329, 447-511, 531-592, and 697-771; these read DMLV…LSLK, GFIF…CTCV, GSIV…LTLN, GDLV…VSNR, GNVY…LTLP, and QVGD…VSAK. Positions 1041-1145 are disordered; that stretch reads KITNGQKKTQ…AKEKAKAEIK (105 aa). The span at 1043-1053 shows a compositional bias: polar residues; the sequence is TNGQKKTQPLT. 2 stretches are compositionally biased toward basic and acidic residues: residues 1057–1082 and 1135–1145; these read VKEKPKQNGKLFFEDKTPAKNAKSET and SAKEKAKAEIK. Residues 1119–1157 are a coiled coil; the sequence is LNVAETQKNAAKKKRLSAKEKAKAEIKEEQRLREIEERN. HAT repeat units follow at residues 1161–1193, 1195–1232, 1265–1297, 1299–1333, 1335–1367, and 1369–1404; these read KARLETIDQYERLVIAQPNNSISWLKYIAFLLS, TEIEKARALARRAISTISFRETQELRNMWSALLNMELV, KRKDRLSSVLTTVLNKFKTELRVWPVAAEAYFW, GKSDQVHNLLQRALRALPNQEHIPCIVSFAKLYAK, DNNDMAQTLLDDVVTSYPKRIDIWSVYVDMLIK, and GLIDSARNVLERAVVQKLKPNKMQVIYKKYLQLEEN.

It is found in the nucleus. Its subcellular location is the nucleolus. In terms of biological role, involved in rRNA processing or maturation during ribosome biogenesis. In Drosophila melanogaster (Fruit fly), this protein is rRNA biogenesis protein RRP5.